We begin with the raw amino-acid sequence, 309 residues long: tRNA dimethylallyltransferase (309 aa).

Position 11–18 (11–18 (GPTASGKS)) interacts with ATP. Residue 13-18 (TASGKS) participates in substrate binding. Interaction with substrate tRNA stretches follow at residues 36-39 (DSMQ) and 160-164 (QRLIR).

Belongs to the IPP transferase family. As to quaternary structure, monomer. It depends on Mg(2+) as a cofactor.

It carries out the reaction adenosine(37) in tRNA + dimethylallyl diphosphate = N(6)-dimethylallyladenosine(37) in tRNA + diphosphate. Its function is as follows. Catalyzes the transfer of a dimethylallyl group onto the adenine at position 37 in tRNAs that read codons beginning with uridine, leading to the formation of N6-(dimethylallyl)adenosine (i(6)A). In Rickettsia felis (strain ATCC VR-1525 / URRWXCal2) (Rickettsia azadi), this protein is tRNA dimethylallyltransferase.